The following is a 105-amino-acid chain: Imizoquin biosynthesis cluster protein I (105 aa).

Residues 1–15 (MSSGEPTTMTPSPSE) are compositionally biased toward polar residues. The segment at 1-43 (MSSGEPTTMTPSPSERTPLLSNGSGGAADDGGTTVTISKPNDG) is disordered.

Its pathway is secondary metabolite biosynthesis. Functionally, part of the gene cluster that mediates the biosynthesis of imizoquins A to D, tripeptide-derived alkaloids that serve a protective role against oxidative stress that are essential for normal germination. ImqB is a canonical three-module NRPS that assembles the tripeptide backbone of the imizoquins via condensation of Trp, Tyr, and Leu-derived precursors. N-methylation by imqF and phenol oxidation by imqC, followed by cyclization via the FAD-dependent oxidase imqH carry out the three-step transformation of L-tyrosine into tetrahydroisoquinoline. Importantly, this sequence requires the presence of a free amine in the tyrosine moiety, indicating that isoquinoline formation occurs prior to peptide bond formation. The imidazolidin-4-one ring of imizoquins could form following additional oxidation of the methyl-derived bridgehead carbon by imqH. Lastly, O-methylation by imqG and leucine hydroxylation by imqE complete biosynthesis of the imizoquins. The polypeptide is Imizoquin biosynthesis cluster protein I (Aspergillus flavus (strain ATCC 200026 / FGSC A1120 / IAM 13836 / NRRL 3357 / JCM 12722 / SRRC 167)).